Here is a 1243-residue protein sequence, read N- to C-terminus: Interphotoreceptor matrix proteoglycan 2 (1243 aa).

A signal peptide spans 1 to 27 (MIMFLPVGRMSLGILILFLTGGNLVSA). Residues 28-1106 (SEERQEPMHA…EFVSEPFVIG (1079 aa)) are Extracellular-facing. A disordered region spans residues 205-234 (GLASESSAASPQESISNEIENVTEEPTQPA). Residues 207 to 220 (ASESSAASPQESIS) are compositionally biased toward low complexity. Positions 221 to 230 (NEIENVTEEP) are enriched in polar residues. N225 carries an N-linked (GlcNAc...) asparagine glycan. Residues 235-349 (AEQIAEFSIQ…KPTAVYTISN (115 aa)) enclose the SEA 1 domain. Residues 255–263 (RDPSSALYR) are hyaluronan-binding motif involved in chondroitin sulfate A-binding. 3 N-linked (GlcNAc...) asparagine glycosylation sites follow: N297, N316, and N366. 3 O-linked (GalNAc...) threonine glycosylation sites follow: T427, T428, and T429. A glycan (N-linked (GlcNAc...) asparagine) is linked at N582. Residues T701, T704, and T712 are each glycosylated (O-linked (GalNAc...) threonine). Residues 748–762 (EDMVHTESSSHKELD) are compositionally biased toward basic and acidic residues. Residues 748–768 (EDMVHTESSSHKELDSEVPVS) are disordered. O-linked (GalNAc...) threonine glycosylation is found at T817 and T888. The SEA 2 domain maps to 900-1013 (GALVVFFSLR…YSLDVESGDE (114 aa)). 2 N-linked (GlcNAc...) asparagine glycosylation sites follow: N945 and N959. EGF-like domains follow at residues 1013 to 1054 (EANP…LPCQ) and 1055 to 1096 (SLCD…QHCE). 6 disulfide bridges follow: C1017-C1028, C1022-C1039, C1041-C1053, C1057-C1070, C1064-C1080, and C1082-C1095. A hyaluronan-binding motif involved in chondroitin sulfate C-binding region spans residues 1083-1091 (RVGSNWWYR). Residues 1107-1127 (ITIASVVSFLLVASAVVFFLV) traverse the membrane as a helical segment. Residues 1128–1136 (KMLQAQNVR) form a hyaluronan-binding motif involved in chondroitin sulfate A- and C-binding region. The Cytoplasmic segment spans residues 1128-1243 (KMLQAQNVRR…FVREHQMEEL (116 aa)). The hyaluronan-binding motif involved in chondroitin sulfate C-binding stretch occupies residues 1139-1147 (RQRPTSSSR). A hyaluronan-binding motif involved in chondroitin sulfate A- and C-binding motif region spans residues 1212-1220 (KEEIQERMR).

As to expression, expressed in the retina (at protein level). Expressed in the pineal gland.

The protein resides in the photoreceptor outer segment membrane. The protein localises to the photoreceptor inner segment membrane. It is found in the secreted. Its subcellular location is the extracellular space. It localises to the extracellular matrix. The protein resides in the interphotoreceptor matrix. In terms of biological role, chondroitin sulfate- and hyaluronan-binding proteoglycan involved in the organization of interphotoreceptor matrix; may participate in the maturation and maintenance of the light-sensitive photoreceptor outer segment. Binds heparin. The chain is Interphotoreceptor matrix proteoglycan 2 (Impg2) from Mus musculus (Mouse).